We begin with the raw amino-acid sequence, 152 residues long: Xanthine-guanine phosphoribosyltransferase (152 aa).

5-phospho-alpha-D-ribose 1-diphosphate is bound by residues 37-38 (RG), Arg-69, and 88-96 (DDLVDTGGT). A GMP-binding site is contributed by Arg-69. Asp-89 is a binding site for Mg(2+). The guanine site is built by Asp-92 and Ile-135. Residues Asp-92 and Ile-135 each contribute to the xanthine site. GMP is bound by residues 92 to 96 (DTGGT) and 134 to 135 (WI).

This sequence belongs to the purine/pyrimidine phosphoribosyltransferase family. XGPT subfamily. In terms of assembly, homotetramer. Requires Mg(2+) as cofactor.

The protein localises to the cell inner membrane. It catalyses the reaction GMP + diphosphate = guanine + 5-phospho-alpha-D-ribose 1-diphosphate. The catalysed reaction is XMP + diphosphate = xanthine + 5-phospho-alpha-D-ribose 1-diphosphate. The enzyme catalyses IMP + diphosphate = hypoxanthine + 5-phospho-alpha-D-ribose 1-diphosphate. The protein operates within purine metabolism; GMP biosynthesis via salvage pathway; GMP from guanine: step 1/1. It participates in purine metabolism; XMP biosynthesis via salvage pathway; XMP from xanthine: step 1/1. Purine salvage pathway enzyme that catalyzes the transfer of the ribosyl-5-phosphate group from 5-phospho-alpha-D-ribose 1-diphosphate (PRPP) to the N9 position of the 6-oxopurines guanine and xanthine to form the corresponding ribonucleotides GMP (guanosine 5'-monophosphate) and XMP (xanthosine 5'-monophosphate), with the release of PPi. To a lesser extent, also acts on hypoxanthine. The polypeptide is Xanthine-guanine phosphoribosyltransferase (Klebsiella pneumoniae (strain 342)).